Consider the following 144-residue polypeptide: Large ribosomal subunit protein uL15 (144 aa).

Residues 1 to 53 (MRLNTLSPAQGAKQAPKRVGRGIGSGLGKTGGRGHKGQNSRTGGGVRRGFEGG) are disordered. Gly residues predominate over residues 21–31 (RGIGSGLGKTG).

It belongs to the universal ribosomal protein uL15 family. Part of the 50S ribosomal subunit.

Functionally, binds to the 23S rRNA. This is Large ribosomal subunit protein uL15 from Hamiltonella defensa subsp. Acyrthosiphon pisum (strain 5AT).